Consider the following 490-residue polypeptide: Betaine aldehyde dehydrogenase (490 aa).

NAD(+)-binding positions include Lys174, Glu177, and 227–232 (GGIETG). Residues Glu249 and Cys283 contribute to the active site. Residue Glu384 participates in NAD(+) binding.

It belongs to the aldehyde dehydrogenase family. Homodimer.

The catalysed reaction is betaine aldehyde + NAD(+) + H2O = glycine betaine + NADH + 2 H(+). The protein operates within amine and polyamine biosynthesis; betaine biosynthesis via choline pathway; betaine from betaine aldehyde: step 1/1. With respect to regulation, activity is stimulated by low concentrations of salts and by moderate concentrations of glycine betaine. Highly tolerant to high ionic conditions. In vitro, activity is highly stimulated in the presence of proline. Functionally, involved in the biosynthesis of the osmoprotectant glycine betaine from choline. Catalyzes the oxidation of betaine aldehyde to betaine. Shows specificity for betaine aldehyde as substrate. Can use both NAD(+) and NADP(+), but NAD(+) is strongly preferred. The sequence is that of Betaine aldehyde dehydrogenase from Bacillus subtilis (strain 168).